Consider the following 278-residue polypeptide: Thioredoxin-related transmembrane protein 1 (278 aa).

Residues 1-26 form the signal peptide; the sequence is MAPSGSLRIPVAVLLLLLWGAPWAHG. Positions 27 to 132 constitute a Thioredoxin domain; that stretch reads KRSDVRIITD…FINFISDKEW (106 aa). Residues 27–180 lie on the Extracellular side of the membrane; sequence KRSDVRIITD…EDLGLPIWGS (154 aa). Catalysis depends on nucleophile residues Cys-56 and Cys-59. Cys-56 and Cys-59 are oxidised to a cystine. A helical membrane pass occupies residues 181–203; that stretch reads YTVFALATLLSGLLLGLFMIFVA. At 204–278 the chain is on the cytoplasmic side; the sequence is DCLCPSKRRR…VGPSLATDKS (75 aa). 2 S-palmitoyl cysteine lipidation sites follow: Cys-205 and Cys-207. The interval 213–278 is disordered; that stretch reads RPQPYPSRKL…VGPSLATDKS (66 aa). Ser-226, Ser-245, Ser-268, Ser-272, and Ser-278 each carry phosphoserine. Positions 235-250 are enriched in acidic residues; it reads EEQEADVEDVSEEESE.

In terms of assembly, interacts with ATP2A2. Post-translationally, palmitoylated; palmitoylation is required for localization to mitochondria-associated endoplasmic reticulum membrane (MAM).

It localises to the endoplasmic reticulum membrane. It is found in the mitochondrion membrane. The protein localises to the secreted. The catalysed reaction is Catalyzes the rearrangement of -S-S- bonds in proteins.. Its function is as follows. Thiredoxin domain-containing protein that participates in various redox reactions through the reversible oxidation of its active center dithiol to a disulfide and catalyze dithiol-disulfide exchange reactions. Acts as a key inhibitor of the alternative triglyceride biosynthesis pathway by inhibiting the activity of TMEM68/DIESL at the endoplasmic reticulum, thereby restricting accumulation of triacylglycerol. The alternative triglyceride biosynthesis pathway mediates formation of triacylglycerol from diacylglycerol and membrane phospholipids. Acts as a protein disulfide isomerase by catalyzing formation or reduction of disulfide bonds. Specifically mediates formation of disulfide bonds of transmembrane proteins at the endoplasmic reticulum membrane. Involved in endoplasmic reticulum-associated degradation (ERAD) via its protein disulfide isomerase activity by acting on folding-defective polypeptides at the endoplasmic reticulum membrane. Acts as a negative regulator of platelet aggregation following secretion in the extracellular space. Acts as a regulator of endoplasmic reticulum-mitochondria contact sites via its ability to regulate redox signals. Regulates endoplasmic reticulum-mitochondria Ca(2+) flux. This is Thioredoxin-related transmembrane protein 1 (TMX1) from Bos taurus (Bovine).